The chain runs to 505 residues: MEELQGYLEIDGFRQHHFLYPLLLQEYIYALAHDHGLNGSILSEPMENLSHDNKSSSLIVKRLITRMHQQNHFIISVNDSNQKGFVGHNKNFHSQKISEGFAVIVEIPFSLQLVSSLEEKEIAKFHNSRSIHSIFPFFEDKLSHLNHVSDILIPYPIHLEILVQTLRCWIQDAPSLHLLRFFLHEYWNSNSLITPKKSISFFSKENQRLFLFLYNSHVYECESVFIFLRKQSSHLRSTSFGSFLERTHFYGKIEHLVVVLGNDFPKTLWLFKDPFVHYVRYQGKSILASRGTQFLIKKWKYHLVNFWQCHFYLWSQPDRIHLNQLCNHSFYFLGYLSSVQLNSSVVRSQMLENAFLMDTAIKKFETIVPIIPLIGSLAKAKFCNGSGHPISKPFRTDLSDSEILNRFGRICKNLSHYHSGSSKKQSLYRIKFILRLSCARTLSRKHKSTVRAFLKRLGSELLEEFLTEEEQVLSLIFPRTPSHRPHRERIWYLDIICINDLANHE.

This sequence belongs to the intron maturase 2 family. MatK subfamily.

The protein localises to the plastid. It localises to the chloroplast. Usually encoded in the trnK tRNA gene intron. Probably assists in splicing its own and other chloroplast group II introns. The protein is Maturase K of Calycanthus occidentalis (Spice bush).